We begin with the raw amino-acid sequence, 560 residues long: Involucrin (560 aa).

The segment covering 1–15 (MSQQHTLPVTLSPAL) has biased composition (polar residues). Disordered regions lie at residues 1 to 131 (MSQQ…KLLD), 150 to 359 (EQLL…LVQQ), and 404 to 534 (GQLK…QSAL). The segment covering 76–91 (EQQQQEPQEQELQQQH) has biased composition (low complexity). 2 stretches are compositionally biased toward basic and acidic residues: residues 92–115 (WEQH…KAQR) and 159–172 (QEGH…REGQ). Residues 189-211 (QKGQLELPEQQEGQLELPEQQEG) show a composition bias toward low complexity. 3 stretches are compositionally biased toward basic and acidic residues: residues 212-231 (QLKH…HQEG), 252-264 (QLKH…KQPE), and 274-320 (KHLE…EHQE). Residues 321-334 (GQLGLPEQQVQQLK) are compositionally biased toward low complexity. Composition is skewed to basic and acidic residues over residues 335–353 (QLEK…EGQL), 404–420 (GQLK…KHLE), 454–463 (QLKHLEKQEA), 476–486 (KHLEQQEKQLE), and 494–510 (QLKH…DLEQ).

This sequence belongs to the involucrin family. Directly or indirectly cross-linked to cornifelin (CNFN). In terms of processing, substrate of transglutaminase. Specific glutamines or lysines are cross-linked to keratins, desmoplakin and to inter involucrin molecules. In terms of tissue distribution, keratinocytes of epidermis and other stratified squamous epithelia.

The protein resides in the cytoplasm. Its function is as follows. Part of the insoluble cornified cell envelope (CE) of stratified squamous epithelia. This Pan paniscus (Pygmy chimpanzee) protein is Involucrin (IVL).